A 414-amino-acid polypeptide reads, in one-letter code: Translation initiation factor 2 subunit gamma (414 aa).

In terms of domain architecture, tr-type G spans 8-206; it reads QPEVNIGVVG…AIEKFIPTPP (199 aa). The tract at residues 17-24 is G1; that stretch reads GHVDHGKT. Mg(2+) is bound by residues D20, T24, G45, and T47. Residue 20 to 25 participates in GTP binding; sequence DHGKTT. The tract at residues 45–49 is G2; it reads GMTIK. Zn(2+)-binding residues include C60, C63, C75, and C77. Residues 93–96 are G3; the sequence is DAPG. GTP contacts are provided by residues 149 to 152 and 184 to 186; these read NKVD and SAL. Residues 149 to 152 form a G4 region; it reads NKVD. Positions 184 to 186 are G5; that stretch reads SAL.

Belongs to the TRAFAC class translation factor GTPase superfamily. Classic translation factor GTPase family. EIF2G subfamily. In terms of assembly, heterotrimer composed of an alpha, a beta and a gamma chain. Mg(2+) serves as cofactor.

The catalysed reaction is GTP + H2O = GDP + phosphate + H(+). In terms of biological role, eIF-2 functions in the early steps of protein synthesis by forming a ternary complex with GTP and initiator tRNA. The sequence is that of Translation initiation factor 2 subunit gamma from Aeropyrum pernix (strain ATCC 700893 / DSM 11879 / JCM 9820 / NBRC 100138 / K1).